A 308-amino-acid chain; its full sequence is Oxygen-dependent coproporphyrinogen-III oxidase (308 aa).

S100 is a substrate binding site. 2 residues coordinate a divalent metal cation: H104 and H114. H114 acts as the Proton donor in catalysis. 116-118 (NFR) lines the substrate pocket. The a divalent metal cation site is built by H153 and H183. The interval 248-283 (YVEFNLVFDRGTIFGLQSGGRTESILSSMPPMATWK) is important for dimerization. Residue 266–268 (GGR) participates in substrate binding.

This sequence belongs to the aerobic coproporphyrinogen-III oxidase family. As to quaternary structure, homodimer. A divalent metal cation is required as a cofactor.

The protein localises to the cytoplasm. It catalyses the reaction coproporphyrinogen III + O2 + 2 H(+) = protoporphyrinogen IX + 2 CO2 + 2 H2O. Its pathway is porphyrin-containing compound metabolism; protoporphyrin-IX biosynthesis; protoporphyrinogen-IX from coproporphyrinogen-III (O2 route): step 1/1. Functionally, involved in the heme biosynthesis. Catalyzes the aerobic oxidative decarboxylation of propionate groups of rings A and B of coproporphyrinogen-III to yield the vinyl groups in protoporphyrinogen-IX. This chain is Oxygen-dependent coproporphyrinogen-III oxidase, found in Francisella tularensis subsp. holarctica (strain LVS).